The following is a 1598-amino-acid chain: Structural maintenance of chromosomes flexible hinge domain-containing protein GMI1 (1598 aa).

The segment at 1191–1218 is disordered; sequence VTSAPTSEREESGYSTPHSKTTPPPESG. Coiled coils occupy residues 1258-1301 and 1565-1595; these read TEDL…ASLE and EEMM…FTAM.

Highly expressed in closed buds and open flowers. Expressed at low levels in roots, stems, cauline leaves and siliques. Expressed in the region of the shoot and floral meristems.

It localises to the nucleus. Functionally, contributes to DNA double-strand break (DSB) repair via somatic homologous recombination. Functions downstream of ATM. The protein is Structural maintenance of chromosomes flexible hinge domain-containing protein GMI1 of Arabidopsis thaliana (Mouse-ear cress).